The primary structure comprises 147 residues: Male-specific protein scotti (147 aa).

The disordered stretch occupies residues 55–93 (PQEPPLGVFPAQGGPNGPPRRRKKRSFYTMTKPTPPCQS). Residues 82-93 (YTMTKPTPPCQS) show a composition bias toward polar residues. Asparagine 128 carries N-linked (GlcNAc...) asparagine glycosylation.

Belongs to the male-specific scotti family. In terms of tissue distribution, expressed in primary spermatocytes and round spermatids. Low expression is seen in very short elongating cysts, but were detected at high levels in a few longer spermatid cysts.

In terms of biological role, post-meiotically transcribed gene that has a role in late spermiogenesis; required for actin cone progression during spermatid individualization. In Drosophila melanogaster (Fruit fly), this protein is Male-specific protein scotti.